The following is a 167-amino-acid chain: MRVPQHYKKPGWQRFFAGMMCGAVISWFFFLFTYGTFQEEQVSLIEKQKEHVKDLNNQISIYQEDLHKLNEDNKRKLLIQSVSVKLLNGDKYKISQPDKTKFEEHVKDDISEVITKDIESVYQTKDLLKRTIENKVYMINEKKYEATVRELIIYTRLTVELEISFAT.

A helical membrane pass occupies residues 15–35 (FFAGMMCGAVISWFFFLFTYG).

It is found in the cell membrane. Its function is as follows. Involved in sporulation. This chain is Sporulation membrane protein YtrI (ytrI), found in Bacillus subtilis (strain 168).